The chain runs to 179 residues: Repressor of phase 1 flagellin gene (179 aa).

Transcriptional repressor of the FliC phase-1 flagellin. This is Repressor of phase 1 flagellin gene (fljA) from Salmonella abony.